We begin with the raw amino-acid sequence, 680 residues long: MMKRQLHRMRQLAHTGSSGRTPETAEFLGEDLLQVEQRLEPAKRAAHNVHKRLQACLQGQSGADMDKRVKKLPLMALSTTMAESFKELDPDSSMGKALEMTCAIQNQLARILAEFEMTLERDVLQPLSRLSEEELPAILKHKKSLQKLVSDWNTLKSRLSQAAKNSGSNQGLGGASGSHTHTTTANKVEMLKEEEEELKKKVEQCKDEYLADLYHFSTKEDSYANYFIHLLEIQADYHRKSLTSLDTALAELRDNHSQADHSPLTTAAPFSRVYGVSLRTHLQDLGRDIALPIEACVLLLLSEGMQEEGLFRLAAGASVLKRLKQTMASDPHSLEEFCSDPHAVAGALKSYLRELPEPLMTSDLYDDWMRAASLKEPGARLEALHDVCSRLPQENFNNLRYLMKFLALLAEEQDVNKMTPSNIAIVLGPNLLWPPEKEGDQAQLDAASVSSIQVVGVVEALIQNADTLFPGDINFNVSGIFPGLAPQEKVSSQQVSEELPPVTVPAPATTPAPTPAPASMAVRERTEADLPKPTSPKVSRNPTETAASAEDMTRKTKRPAPARPTMPPPQPSSTRSSPPAPSLPPGSVSPGTPQALPRRLVGTSLRAPTMPPPLPPVPPQPARRQSRRLPASPVISNMPAQVDQGVATEDRGGPEAVGGHPPPPALPPQPRPRGLISETE.

The segment covering 1 to 11 (MMKRQLHRMRQ) has biased composition (basic residues). Disordered regions lie at residues 1-24 (MMKRQLHRMRQLAHTGSSGRTPET) and 160-184 (SQAAKNSGSNQGLGGASGSHTHTTT). The interval 1 to 275 (MMKRQLHRMR…TAAPFSRVYG (275 aa)) is interaction with CGNL1. In terms of domain architecture, BAR spans 81 to 262 (MAESFKELDP…RDNHSQADHS (182 aa)). Over residues 160–169 (SQAAKNSGSN) the composition is skewed to polar residues. A phosphoserine mark is found at Ser-241 and Ser-262. One can recognise a Rho-GAP domain in the interval 276 to 469 (VSLRTHLQDL…ALIQNADTLF (194 aa)). The tract at residues 470-680 (PGDINFNVSG…RPRGLISETE (211 aa)) is interaction with CD2AP. Residues 488–680 (EKVSSQQVSE…RPRGLISETE (193 aa)) form a disordered region. Pro residues predominate over residues 502–516 (VTVPAPATTPAPTPA). A Phosphoserine modification is found at Ser-535. A compositionally biased stretch (polar residues) spans 536–546 (PKVSRNPTETA). Over residues 561-571 (PARPTMPPPQP) the composition is skewed to pro residues. The residue at position 582 (Ser-582) is a Phosphoserine. Position 592 is a phosphothreonine (Thr-592). The SH3-binding signature appears at 607 to 616 (APTMPPPLPP). The segment covering 609–621 (TMPPPLPPVPPQP) has biased composition (pro residues). Ser-632 is modified (phosphoserine). Residues 660–671 (HPPPPALPPQPR) are compositionally biased toward pro residues.

In terms of assembly, interacts with RAC1. Interacts with the exocyst via EXOC4 and EXOC8; required for the localization of both SH3BP1 and the exocyst to the leading edge of migrating cells. Interacts with CD2AP and CGNL1; probably part of a complex at cell junctions. Interacts with CAPZA1; recruits CAPZA1 to forming cell junctions. May interact with AFDN. Interacts with PLXND1; they dissociate upon SEMA3E binding to PLXND1 allowing SH3BP1 to transduce downstream signal through RAC1 inactivation. Interacts with ABL1, GRB2 and SRC (via SH3 domain). As to expression, expressed in all tissues examined. Highest levels found in spleen and brain, lowest in heart and liver.

The protein resides in the cell projection. It localises to the cell junction. The protein localises to the tight junction. Its subcellular location is the adherens junction. It is found in the phagocytic cup. The protein resides in the nucleus. It localises to the cytoplasm. The protein localises to the cytosol. GTPase activating protein (GAP) which specifically converts GTP-bound Rho-type GTPases including RAC1 and CDC42 in their inactive GDP-bound form. By specifically inactivating RAC1 at the leading edge of migrating cells, it regulates the spatiotemporal organization of cell protrusions which is important for proper cell migration. Also negatively regulates CDC42 in the process of actin remodeling and the formation of epithelial cell junctions. Through its GAP activity toward RAC1 and/or CDC42 plays a specific role in phagocytosis of large particles. Specifically recruited by a PI3 kinase/PI3K-dependent mechanism to sites of large particles engagement, inactivates RAC1 and/or CDC42 allowing the reorganization of the underlying actin cytoskeleton required for engulfment. It also plays a role in angiogenesis and the process of repulsive guidance as part of a semaphorin-plexin signaling pathway. Following the binding of PLXND1 to extracellular SEMA3E it dissociates from PLXND1 and inactivates RAC1, inducing the intracellular reorganization of the actin cytoskeleton and the collapse of cells. The sequence is that of SH3 domain-binding protein 1 from Mus musculus (Mouse).